A 433-amino-acid chain; its full sequence is Serine--tRNA ligase (433 aa).

235–237 (TSE) lines the L-serine pocket. 266–268 (RSE) serves as a coordination point for ATP. Residue Glu289 coordinates L-serine. 353-356 (EISS) contributes to the ATP binding site. Residue Ser388 participates in L-serine binding.

The protein belongs to the class-II aminoacyl-tRNA synthetase family. Type-1 seryl-tRNA synthetase subfamily. In terms of assembly, homodimer. The tRNA molecule binds across the dimer.

Its subcellular location is the cytoplasm. The enzyme catalyses tRNA(Ser) + L-serine + ATP = L-seryl-tRNA(Ser) + AMP + diphosphate + H(+). It catalyses the reaction tRNA(Sec) + L-serine + ATP = L-seryl-tRNA(Sec) + AMP + diphosphate + H(+). Its pathway is aminoacyl-tRNA biosynthesis; selenocysteinyl-tRNA(Sec) biosynthesis; L-seryl-tRNA(Sec) from L-serine and tRNA(Sec): step 1/1. In terms of biological role, catalyzes the attachment of serine to tRNA(Ser). Is also able to aminoacylate tRNA(Sec) with serine, to form the misacylated tRNA L-seryl-tRNA(Sec), which will be further converted into selenocysteinyl-tRNA(Sec). In Burkholderia lata (strain ATCC 17760 / DSM 23089 / LMG 22485 / NCIMB 9086 / R18194 / 383), this protein is Serine--tRNA ligase.